The chain runs to 827 residues: Lon protease (827 aa).

Residues 38-233 enclose the Lon N-terminal domain; that stretch reads LTLLASKYNV…VLLKYLLKDL (196 aa). 384–391 is a binding site for ATP; it reads GPPGVGKT. The 182-residue stretch at 619 to 800 folds into the Lon proteolytic domain; that stretch reads THLPGVAIGL…EEVIQLALQP (182 aa). Residues serine 706 and lysine 749 contribute to the active site.

This sequence belongs to the peptidase S16 family. As to quaternary structure, homohexamer. Organized in a ring with a central cavity.

The protein resides in the cytoplasm. The catalysed reaction is Hydrolysis of proteins in presence of ATP.. In terms of biological role, ATP-dependent serine protease that mediates the selective degradation of mutant and abnormal proteins as well as certain short-lived regulatory proteins. Required for cellular homeostasis and for survival from DNA damage and developmental changes induced by stress. Degrades polypeptides processively to yield small peptide fragments that are 5 to 10 amino acids long. Binds to DNA in a double-stranded, site-specific manner. The protein is Lon protease of Amoebophilus asiaticus (strain 5a2).